The sequence spans 121 residues: Cell division protein FtsB (121 aa).

Residues 1–6 (MRNWRW) are Cytoplasmic-facing. The chain crosses the membrane as a helical span at residues 7 to 24 (LLLVLAVLLAWLQYRFWF). Residues 25-121 (GPGNSGEVMM…PASTDPVDHP (97 aa)) are Periplasmic-facing. The stretch at 31–66 (EVMMLEAQVAHQTQDNEGLRQRNQALAAEVKDLKDG) forms a coiled coil. The disordered stretch occupies residues 94 to 121 (APLPAPASPETAAPAQQAPASTDPVDHP). Residues 101-121 (SPETAAPAQQAPASTDPVDHP) show a composition bias toward low complexity.

It belongs to the FtsB family. Part of a complex composed of FtsB, FtsL and FtsQ.

Its subcellular location is the cell inner membrane. Essential cell division protein. May link together the upstream cell division proteins, which are predominantly cytoplasmic, with the downstream cell division proteins, which are predominantly periplasmic. The chain is Cell division protein FtsB from Xanthomonas oryzae pv. oryzae (strain MAFF 311018).